Consider the following 353-residue polypeptide: Photosystem II protein D1 (353 aa).

Position 2 is an N-acetylthreonine (Thr2). At Thr2 the chain carries Phosphothreonine. The next 3 membrane-spanning stretches (helical) occupy residues 29–46 (YIGW…TATS), 118–133 (HFLL…EWEL), and 142–156 (WIAV…AATA). Position 118 (His118) interacts with chlorophyll a. Tyr126 provides a ligand contact to pheophytin a. [CaMn4O5] cluster contacts are provided by Asp170 and Glu189. A helical membrane pass occupies residues 197–218 (FHMLGVAGVFGGSLFSAMHGSL). His198 is a chlorophyll a binding site. A quinone-binding positions include His215 and 264 to 265 (SF). A Fe cation-binding site is contributed by His215. Fe cation is bound at residue His272. Residues 274–288 (FLAAWPVVGIWFTAL) traverse the membrane as a helical segment. His332, Glu333, Asp342, and Ala344 together coordinate [CaMn4O5] cluster. Residues 345–353 (AVEAPSING) constitute a propeptide that is removed on maturation.

The protein belongs to the reaction center PufL/M/PsbA/D family. In terms of assembly, PSII is composed of 1 copy each of membrane proteins PsbA, PsbB, PsbC, PsbD, PsbE, PsbF, PsbH, PsbI, PsbJ, PsbK, PsbL, PsbM, PsbT, PsbX, PsbY, PsbZ, Psb30/Ycf12, at least 3 peripheral proteins of the oxygen-evolving complex and a large number of cofactors. It forms dimeric complexes. Requires The D1/D2 heterodimer binds P680, chlorophylls that are the primary electron donor of PSII, and subsequent electron acceptors. It shares a non-heme iron and each subunit binds pheophytin, quinone, additional chlorophylls, carotenoids and lipids. D1 provides most of the ligands for the Mn4-Ca-O5 cluster of the oxygen-evolving complex (OEC). There is also a Cl(-1) ion associated with D1 and D2, which is required for oxygen evolution. The PSII complex binds additional chlorophylls, carotenoids and specific lipids. as cofactor. In terms of processing, tyr-161 forms a radical intermediate that is referred to as redox-active TyrZ, YZ or Y-Z. C-terminally processed by CTPA; processing is essential to allow assembly of the oxygen-evolving complex and thus photosynthetic growth.

It is found in the plastid. The protein resides in the chloroplast thylakoid membrane. It catalyses the reaction 2 a plastoquinone + 4 hnu + 2 H2O = 2 a plastoquinol + O2. In terms of biological role, photosystem II (PSII) is a light-driven water:plastoquinone oxidoreductase that uses light energy to abstract electrons from H(2)O, generating O(2) and a proton gradient subsequently used for ATP formation. It consists of a core antenna complex that captures photons, and an electron transfer chain that converts photonic excitation into a charge separation. The D1/D2 (PsbA/PsbD) reaction center heterodimer binds P680, the primary electron donor of PSII as well as several subsequent electron acceptors. This chain is Photosystem II protein D1, found in Lotus japonicus (Lotus corniculatus var. japonicus).